We begin with the raw amino-acid sequence, 183 residues long: Senescence-associated protein DIN1 (183 aa).

The Rhodanese domain maps to 83–183; that stretch reads AQAGYKHLDV…WTENELPVEE (101 aa).

Is thought to act during the early stages of leaf senescence. The chain is Senescence-associated protein DIN1 (DIN1) from Raphanus sativus (Radish).